A 73-amino-acid chain; its full sequence is Probable cytochrome b-c1 complex subunit 8 (73 aa).

Residues 1 to 42 lie on the Mitochondrial matrix side of the membrane; that stretch reads MGQASKVFGKQITYSVSPFQQKLFVNYFKNAIPHLRRGVKDN. A helical transmembrane segment spans residues 43–60; it reads FFCSVPYFAALYITVNWA. The Mitochondrial intermembrane portion of the chain corresponds to 61 to 73; sequence NETYHNEMKDHWY.

Belongs to the UQCRQ/QCR8 family. As to quaternary structure, component of the ubiquinol-cytochrome c oxidoreductase (cytochrome b-c1 complex, complex III, CIII), a multisubunit enzyme composed of 3 respiratory subunits cytochrome b, cytochrome c1 and Rieske protein, 2 core protein subunits, and additional low-molecular weight protein subunits. The complex exists as an obligatory dimer and forms supercomplexes (SCs) in the inner mitochondrial membrane with cytochrome c oxidase (complex IV, CIV).

The protein resides in the mitochondrion inner membrane. Its function is as follows. Component of the ubiquinol-cytochrome c oxidoreductase, a multisubunit transmembrane complex that is part of the mitochondrial electron transport chain which drives oxidative phosphorylation. The respiratory chain contains 3 multisubunit complexes succinate dehydrogenase (complex II, CII), ubiquinol-cytochrome c oxidoreductase (cytochrome b-c1 complex, complex III, CIII) and cytochrome c oxidase (complex IV, CIV), that cooperate to transfer electrons derived from NADH and succinate to molecular oxygen, creating an electrochemical gradient over the inner membrane that drives transmembrane transport and the ATP synthase. The cytochrome b-c1 complex catalyzes electron transfer from ubiquinol to cytochrome c, linking this redox reaction to translocation of protons across the mitochondrial inner membrane, with protons being carried across the membrane as hydrogens on the quinol. In the process called Q cycle, 2 protons are consumed from the matrix, 4 protons are released into the intermembrane space and 2 electrons are passed to cytochrome c. The chain is Probable cytochrome b-c1 complex subunit 8 from Dictyostelium discoideum (Social amoeba).